A 698-amino-acid chain; its full sequence is Elongation factor G (698 aa).

The tr-type G domain maps to 8–290 (ERYRNIGISA…AVIELLPSPV (283 aa)). Residues 17-24 (AHIDAGKT), 88-92 (DTPGH), and 142-145 (NKMD) contribute to the GTP site.

This sequence belongs to the TRAFAC class translation factor GTPase superfamily. Classic translation factor GTPase family. EF-G/EF-2 subfamily.

Its subcellular location is the cytoplasm. Its function is as follows. Catalyzes the GTP-dependent ribosomal translocation step during translation elongation. During this step, the ribosome changes from the pre-translocational (PRE) to the post-translocational (POST) state as the newly formed A-site-bound peptidyl-tRNA and P-site-bound deacylated tRNA move to the P and E sites, respectively. Catalyzes the coordinated movement of the two tRNA molecules, the mRNA and conformational changes in the ribosome. This is Elongation factor G from Aromatoleum aromaticum (strain DSM 19018 / LMG 30748 / EbN1) (Azoarcus sp. (strain EbN1)).